Consider the following 369-residue polypeptide: Superinfection exclusion protein (369 aa).

An N-terminal signal peptide occupies residues 1–15; sequence MIALLILSLTCSVST.

Belongs to the serpin family. Orthopoxvirus OPG040 subfamily. As to quaternary structure, interacts with OPG185/A56 protein.

It is found in the virion membrane. The protein resides in the host cell membrane. Functionally, negatively regulates superinfection and syncytium formation in infected host cells. Acts in concert with OPG185/A56 protein at the host cell membrane by interacting with and inhibiting the mature virion entry/fusion complex (EFC). This mechanism ensures that new virions released from the cell cannot enter already infected cells. The sequence is that of Superinfection exclusion protein (OPG040) from Vaccinia virus (strain Western Reserve) (VACV).